A 239-amino-acid chain; its full sequence is MKNKRSQNSPYVTPNNPYLTLEKALGYSFKDKRLLEQALTHKSCKLALNNERLEFLGDAVLGLVIGELLYHKFYQYDEGKLSKLRASIVSAHGFTKLAKAIALQDYLRVSSSEEISNGREKPSILSSAFEALMAGVYLEAGLAKVRKIIQNLLNRAYKRLDLEHLFMDYKTALQELTQAQFCVIPTYQLLQEKGPDHHKEFEMALYIQDKMYATAKGKSKKEAEQQCAYQALQKLKEAK.

Positions 18–141 (YLTLEKALGY…LMAGVYLEAG (124 aa)) constitute an RNase III domain. E54 lines the Mg(2+) pocket. D58 is a catalytic residue. 2 residues coordinate Mg(2+): S127 and E130. Residue E130 is part of the active site. Residues 168–237 (DYKTALQELT…AYQALQKLKE (70 aa)) form the DRBM domain.

This sequence belongs to the ribonuclease III family. As to quaternary structure, homodimer. Mg(2+) is required as a cofactor.

Its subcellular location is the cytoplasm. It carries out the reaction Endonucleolytic cleavage to 5'-phosphomonoester.. Functionally, digests double-stranded RNA. Involved in the processing of primary rRNA transcript to yield the immediate precursors to the large and small rRNAs (23S and 16S). Processes some mRNAs, and tRNAs when they are encoded in the rRNA operon. Processes pre-crRNA and tracrRNA of type II CRISPR loci if present in the organism. The sequence is that of Ribonuclease 3 from Helicobacter pylori (strain P12).